Consider the following 103-residue polypeptide: Small ribosomal subunit protein uS10 (103 aa).

This sequence belongs to the universal ribosomal protein uS10 family. Part of the 30S ribosomal subunit.

Involved in the binding of tRNA to the ribosomes. The chain is Small ribosomal subunit protein uS10 from Stutzerimonas stutzeri (strain A1501) (Pseudomonas stutzeri).